The primary structure comprises 205 residues: Small ribosomal subunit protein uS5 (205 aa).

One can recognise an S5 DRBM domain in the interval 49–112 (LEDEVLDIAM…TKAKMNLVKV (64 aa)).

Belongs to the universal ribosomal protein uS5 family. In terms of assembly, part of the 30S ribosomal subunit. Contacts protein S4.

In terms of biological role, with S4 and S12 plays an important role in translational accuracy. The chain is Small ribosomal subunit protein uS5 from Methanoregula boonei (strain DSM 21154 / JCM 14090 / 6A8).